We begin with the raw amino-acid sequence, 397 residues long: ATP-dependent RNA helicase RhlB (397 aa).

The Q motif signature appears at 9-37; it reads TRFHDFNLAPSLMHAIHDLGFPYCTPIQA. The region spanning 40–220 is the Helicase ATP-binding domain; that stretch reads LGFTLRGQDA…KQWTVDPAIV (181 aa). 53–60 provides a ligand contact to ATP; that stretch reads AQTGTGKT. A DEAD box motif is present at residues 166 to 169; that stretch reads DEAD. Residues 243–393 enclose the Helicase C-terminal domain; sequence DKYKLLYNLV…MPPAELLKPV (151 aa).

The protein belongs to the DEAD box helicase family. RhlB subfamily. As to quaternary structure, component of the RNA degradosome, which is a multiprotein complex involved in RNA processing and mRNA degradation.

The protein resides in the cytoplasm. It catalyses the reaction ATP + H2O = ADP + phosphate + H(+). In terms of biological role, DEAD-box RNA helicase involved in RNA degradation. Has RNA-dependent ATPase activity and unwinds double-stranded RNA. The chain is ATP-dependent RNA helicase RhlB from Pseudomonas aeruginosa (strain UCBPP-PA14).